Here is a 336-residue protein sequence, read N- to C-terminus: DNA polymerase beta (336 aa).

Positions 59, 61, and 64 each coordinate K(+). Residues lysine 59, leucine 61, and valine 64 each contribute to the Na(+) site. Lysine 71 (nucleophile; Schiff-base intermediate with DNA; for 5'-dRP lyase activity) is an active-site residue. Arginine 82 carries the omega-N-methylarginine; by PRMT6 modification. K(+) is bound by residues threonine 100, valine 102, and isoleucine 105. Na(+)-binding residues include threonine 100, valine 102, and isoleucine 105. Arginine 148 contacts a 2'-deoxyribonucleoside 5'-triphosphate. Arginine 151 is subject to Omega-N-methylarginine; by PRMT6. 4 residues coordinate a 2'-deoxyribonucleoside 5'-triphosphate: serine 179, arginine 182, glycine 188, and aspartate 189. The segment at 182 to 191 (RGAESSGDID) is DNA-binding. The Mg(2+) site is built by aspartate 189, aspartate 191, and aspartate 257.

The protein belongs to the DNA polymerase type-X family. Mg(2+) is required as a cofactor. In terms of processing, methylation by PRMT6 stimulates the polymerase activity by enhancing DNA binding and processivity. Post-translationally, ubiquitinated: monoubiquitinated by huwe1/arf-bp1. Monoubiquitinated protein is then the target of stub1/chip, which catalyzes polyubiquitination from monoubiquitin, leading to degradation by the proteasome. usp47 mediates the deubiquitination of monoubiquitinated protein, preventing polyubiquitination by STUB1/CHIP and its subsequent degradation.

It is found in the nucleus. It localises to the cytoplasm. It catalyses the reaction DNA(n) + a 2'-deoxyribonucleoside 5'-triphosphate = DNA(n+1) + diphosphate. The enzyme catalyses a 5'-end 2'-deoxyribose-2'-deoxyribonucleotide-DNA = (2E,4S)-4-hydroxypenten-2-al-5-phosphate + a 5'-end 5'-phospho-2'-deoxyribonucleoside-DNA + H(+). It carries out the reaction 2'-deoxyribonucleotide-(2'-deoxyribose 5'-phosphate)-2'-deoxyribonucleotide-DNA = a 3'-end 2'-deoxyribonucleotide-(2,3-dehydro-2,3-deoxyribose 5'-phosphate)-DNA + a 5'-end 5'-phospho-2'-deoxyribonucleoside-DNA + H(+). In terms of biological role, repair polymerase that plays a key role in base-excision repair. During this process, the damaged base is excised by specific DNA glycosylases, the DNA backbone is nicked at the abasic site by an apurinic/apyrimidic (AP) endonuclease, and POLB removes 5'-deoxyribose-phosphate from the preincised AP site acting as a 5'-deoxyribose-phosphate lyase (5'-dRP lyase); through its DNA polymerase activity, it adds one nucleotide to the 3' end of the arising single-nucleotide gap. Conducts 'gap-filling' DNA synthesis in a stepwise distributive fashion rather than in a processive fashion as for other DNA polymerases. It is also able to cleave sugar-phosphate bonds 3' to an intact AP site, acting as an AP lyase. The sequence is that of DNA polymerase beta (polb) from Danio rerio (Zebrafish).